The following is a 786-amino-acid chain: Endonuclease MutS2 (786 aa).

Residue 334–341 (GPNTGGKT) coordinates ATP. Residues 711 to 786 (LDLRGERYEN…GNGATVVYFK (76 aa)) enclose the Smr domain.

The protein belongs to the DNA mismatch repair MutS family. MutS2 subfamily. Homodimer. Binds to stalled ribosomes, contacting rRNA.

Its function is as follows. Endonuclease that is involved in the suppression of homologous recombination and thus may have a key role in the control of bacterial genetic diversity. In terms of biological role, acts as a ribosome collision sensor, splitting the ribosome into its 2 subunits. Detects stalled/collided 70S ribosomes which it binds and splits by an ATP-hydrolysis driven conformational change. Acts upstream of the ribosome quality control system (RQC), a ribosome-associated complex that mediates the extraction of incompletely synthesized nascent chains from stalled ribosomes and their subsequent degradation. Probably generates substrates for RQC. This Ligilactobacillus salivarius (strain UCC118) (Lactobacillus salivarius) protein is Endonuclease MutS2.